Consider the following 975-residue polypeptide: Protein cramped (975 aa).

5 disordered regions span residues 1 to 37 (MEEL…GGGA), 71 to 111 (QKMK…GSGK), 318 to 346 (AIFP…PSVA), 403 to 450 (PVAA…LMKM), and 809 to 844 (PIDR…QEPG). Residues 7 to 20 (QPPPPPPLPPPPSS) show a composition bias toward pro residues. Residues 86 to 98 (SEREPNKKEEKAA) are compositionally biased toward basic and acidic residues. Positions 100 to 111 (KTPSQLKTGSGK) are enriched in polar residues. The region spanning 109–173 (SGKTTWTNVE…HYYQTYHKIC (65 aa)) is the SANT domain. The segment covering 410 to 425 (LRTESGSEKRSPETKK) has biased composition (basic and acidic residues). Residues 815-833 (GTSSGGISSSGSKPDSSMG) are compositionally biased toward low complexity.

It belongs to the cramped family.

Its subcellular location is the nucleus. Polycomb group (Pc-G) genes are needed to maintain expression patterns of the homeotic selector genes of the Antennapedia (Antp-C) and Bithorax (Bx-C) complexes, and hence for the maintenance of segmental determination. Can act as a modifier of position effect variegation (PEV). This is Protein cramped (crm) from Drosophila sechellia (Fruit fly).